Reading from the N-terminus, the 470-residue chain is MTNIITRFAPSPTGFLHIGSARTALFNYLFARHNNGKFFLRIEDTDKKRSTKEAVEAIFSGLKWLGLNWDGEVIFQSKRNSLYKEAALKLLKEGKAYYCFTRQEEIAKQRQQALKDKQHFIFNSEWRDKGPSTYPADIKPVIRLKVPREGSITIHDTLQGEIVIENSHIDDMILIRTDGTATYMLAVIVDDHDMGITHIIRGDDHLTNAARQIAIYHAFGYEVPNMTHIPLIHGADGTKLSKRHGALGVEAYKDMGYLPESLCNYLLRLGWSHGDDEIISMNQAIEWFNLASLGKSPSKLDFAKMNSINSHYLRMLDNDSLTSKTVEILKQNYKISEKEVSYIKQAMPSLIVRSETLRDLAQLAYIYLVDSPMIYSQDAKEVINNCDKDLIKQVIENLSKLEQFNKECVQNKFKEIAIYNGLKLNDIMKPVRALITGMTASPSVFEIAETLGKENILKRLKIIYYNNLNF.

A 'HIGH' region motif is present at residues 10 to 20; that stretch reads PSPTGFLHIGS. The 'KMSKS' region signature appears at 239–243; that stretch reads KLSKR. ATP is bound at residue Lys-242.

The protein belongs to the class-I aminoacyl-tRNA synthetase family. Glutamate--tRNA ligase type 1 subfamily. In terms of assembly, monomer.

The protein resides in the cytoplasm. It catalyses the reaction tRNA(Glu) + L-glutamate + ATP = L-glutamyl-tRNA(Glu) + AMP + diphosphate. Its function is as follows. Catalyzes the attachment of glutamate to tRNA(Glu) in a two-step reaction: glutamate is first activated by ATP to form Glu-AMP and then transferred to the acceptor end of tRNA(Glu). The protein is Glutamate--tRNA ligase 2 of Rickettsia prowazekii (strain Madrid E).